Reading from the N-terminus, the 298-residue chain is Probable oxidoreductase (298 aa).

Residue 9 to 33 coordinates NAD(+); sequence VVTGGASGLGAETVRALAAAGAEVT. A substrate-binding site is contributed by S139. The Proton acceptor role is filled by Y165.

This sequence belongs to the short-chain dehydrogenases/reductases (SDR) family.

The polypeptide is Probable oxidoreductase (Streptomyces antibioticus).